A 446-amino-acid polypeptide reads, in one-letter code: Chromosomal replication initiator protein DnaA (446 aa).

A domain I, interacts with DnaA modulators region spans residues 1–73; the sequence is MAAQLNELWQ…INSMKIITTK (73 aa). The domain II stretch occupies residues 73–107; the sequence is KKYDIAFLISSEEALETDEDQETDTNNVNTDTSSS. The tract at residues 108–324 is domain III, AAA+ region; it reads MLNPKYKFDS…GALIRIVAFS (217 aa). ATP is bound by residues Gly-152, Gly-154, Lys-155, and Thr-156. The tract at residues 325 to 446 is domain IV, binds dsDNA; the sequence is SLTNKEISVD…NEITKRFSPK (122 aa).

Belongs to the DnaA family. Oligomerizes as a right-handed, spiral filament on DNA at oriC.

Its subcellular location is the cytoplasm. Its function is as follows. Plays an essential role in the initiation and regulation of chromosomal replication. ATP-DnaA binds to the origin of replication (oriC) to initiate formation of the DNA replication initiation complex once per cell cycle. Binds the DnaA box (a 9 base pair repeat at the origin) and separates the double-stranded (ds)DNA. Forms a right-handed helical filament on oriC DNA; dsDNA binds to the exterior of the filament while single-stranded (ss)DNA is stabiized in the filament's interior. The ATP-DnaA-oriC complex binds and stabilizes one strand of the AT-rich DNA unwinding element (DUE), permitting loading of DNA polymerase. After initiation quickly degrades to an ADP-DnaA complex that is not apt for DNA replication. Binds acidic phospholipids. The polypeptide is Chromosomal replication initiator protein DnaA (Clostridium acetobutylicum (strain ATCC 824 / DSM 792 / JCM 1419 / IAM 19013 / LMG 5710 / NBRC 13948 / NRRL B-527 / VKM B-1787 / 2291 / W)).